Reading from the N-terminus, the 179-residue chain is MKQFLDFLPLVVFFAFYKLYDIYAATTALIVATAIVLIYSWVRYRKVEKMALITFVLVAVFGGLTLFFHNDEFIKWKVTVIYALFAGALLFSQWVMKKPLIQRMLGKELALPQQVWSRLNLAWAVFFILCGLANIYIAFWLPQNIWVNFKVFGLTALTLVFTLLSGIYIYRHMPQDDHH.

A run of 5 helical transmembrane segments spans residues 22–42 (IYAA…YSWV), 50–70 (MALI…FFHN), 76–96 (WKVT…QWVM), 121–141 (LAWA…AFWL), and 149–169 (FKVF…GIYI).

This sequence belongs to the YciB family.

The protein localises to the cell inner membrane. Plays a role in cell envelope biogenesis, maintenance of cell envelope integrity and membrane homeostasis. The sequence is that of Inner membrane-spanning protein YciB from Klebsiella pneumoniae (strain 342).